A 128-amino-acid chain; its full sequence is Dehydrin Xero 1 (128 aa).

Polar residues predominate over residues 1 to 19 (MESYQNQSGAQQTHQQLDQ). The disordered stretch occupies residues 1 to 128 (MESYQNQSGA…IKEKLPGGHH (128 aa)). 2 stretches are compositionally biased toward low complexity: residues 23–41 (PFPA…PAVA) and 48–60 (GMLH…SSSS). The span at 75 to 91 (GITEKIKEKLPGHHDSN) shows a compositional bias: basic and acidic residues. Residues 92-104 (KTSSLGSTTTAYD) are compositionally biased toward polar residues. The segment covering 107–128 (TVHHEKKGMMEKIKEKLPGGHH) has biased composition (basic and acidic residues).

It belongs to the plant dehydrin family.

The sequence is that of Dehydrin Xero 1 (XERO1) from Arabidopsis thaliana (Mouse-ear cress).